Here is a 519-residue protein sequence, read N- to C-terminus: Protein M35 (519 aa).

Residues 485–519 (PVRPIRGGGQRMANMRGARPYSTVQRGRRRHESEV) are disordered. The span at 510-519 (RGRRRHESEV) shows a compositional bias: basic residues.

The protein localises to the host nucleus. Its function is as follows. Plays a role in the inhibition of host type I interferon production within the host nucleus. Targets specifically the NF-kappa-B-mediated interferon-beta transcription. The chain is Protein M35 (M35) from Mus musculus (Mouse).